Consider the following 187-residue polypeptide: ATP-dependent protease subunit HslV (187 aa).

Thr7 is a catalytic residue. 3 residues coordinate Na(+): Ala162, Cys165, and Thr168.

Belongs to the peptidase T1B family. HslV subfamily. A double ring-shaped homohexamer of HslV is capped on each side by a ring-shaped HslU homohexamer. The assembly of the HslU/HslV complex is dependent on binding of ATP.

It is found in the cytoplasm. The catalysed reaction is ATP-dependent cleavage of peptide bonds with broad specificity.. With respect to regulation, allosterically activated by HslU binding. In terms of biological role, protease subunit of a proteasome-like degradation complex believed to be a general protein degrading machinery. In Methylococcus capsulatus (strain ATCC 33009 / NCIMB 11132 / Bath), this protein is ATP-dependent protease subunit HslV.